Consider the following 469-residue polypeptide: Neuraminidase (469 aa).

Topologically, residues 1 to 9 are intravirion; sequence MNPNQKIIT. The chain crosses the membrane as a helical span at residues 10–30; that stretch reads IGSVSLTIATICFLMQIAILV. Positions 11–33 are involved in apical transport and lipid raft association; that stretch reads GSVSLTIATICFLMQIAILVTTV. Topologically, residues 31-469 are virion surface; the sequence is TTVTLHFKQY…DGADINLMPI (439 aa). Positions 36–88 are hypervariable stalk region; it reads HFKQYECSSPPNNQVIPCQPTIIERNITEIVYLTNTTIEKEICPKLVEYRNWS. Residues Asn61, Asn70, and Asn86 are each glycosylated (N-linked (GlcNAc...) asparagine; by host). Positions 91 to 469 are head of neuraminidase; sequence QCKITGFAPF…DGADINLMPI (379 aa). Intrachain disulfides connect Cys92–Cys417, Cys124–Cys129, Cys183–Cys230, Cys232–Cys237, Cys278–Cys291, Cys280–Cys289, Cys318–Cys337, and Cys421–Cys447. A substrate-binding site is contributed by Arg118. A glycan (N-linked (GlcNAc...) asparagine; by host) is linked at Asn146. Residue Asp151 is the Proton donor/acceptor of the active site. Arg152 contacts substrate. N-linked (GlcNAc...) asparagine; by host glycans are attached at residues Asn200 and Asn234. Residue 276-277 participates in substrate binding; sequence EE. Residue Arg292 participates in substrate binding. Ca(2+) contacts are provided by Asp293, Gly297, and Asp324. Residues 326-350 are disordered; sequence PRKNDSSSSSYCQNPNNEKGSHGVK. N-linked (GlcNAc...) asparagine; by host glycosylation occurs at Asn329. Residues 331-343 are compositionally biased toward polar residues; sequence SSSSSYCQNPNNE. Arg371 is a binding site for substrate. A glycan (N-linked (GlcNAc...) asparagine; by host) is linked at Asn402. Tyr406 functions as the Nucleophile in the catalytic mechanism.

The protein belongs to the glycosyl hydrolase 34 family. As to quaternary structure, homotetramer. Ca(2+) serves as cofactor. Post-translationally, N-glycosylated.

It is found in the virion membrane. The protein resides in the host apical cell membrane. It catalyses the reaction Hydrolysis of alpha-(2-&gt;3)-, alpha-(2-&gt;6)-, alpha-(2-&gt;8)- glycosidic linkages of terminal sialic acid residues in oligosaccharides, glycoproteins, glycolipids, colominic acid and synthetic substrates.. Its activity is regulated as follows. Inhibited by the neuraminidase inhibitors zanamivir (Relenza) and oseltamivir (Tamiflu). These drugs interfere with the release of progeny virus from infected cells and are effective against all influenza strains. Resistance to neuraminidase inhibitors is quite rare. Catalyzes the removal of terminal sialic acid residues from viral and cellular glycoconjugates. Cleaves off the terminal sialic acids on the glycosylated HA during virus budding to facilitate virus release. Additionally helps virus spread through the circulation by further removing sialic acids from the cell surface. These cleavages prevent self-aggregation and ensure the efficient spread of the progeny virus from cell to cell. Otherwise, infection would be limited to one round of replication. Described as a receptor-destroying enzyme because it cleaves a terminal sialic acid from the cellular receptors. May facilitate viral invasion of the upper airways by cleaving the sialic acid moieties on the mucin of the airway epithelial cells. Likely to plays a role in the budding process through its association with lipid rafts during intracellular transport. May additionally display a raft-association independent effect on budding. Plays a role in the determination of host range restriction on replication and virulence. Sialidase activity in late endosome/lysosome traffic seems to enhance virus replication. This Influenza A virus (strain A/Kitakyushu/159/1993 H3N2) protein is Neuraminidase.